A 179-amino-acid polypeptide reads, in one-letter code: ECF RNA polymerase sigma factor SigF (179 aa).

The segment at 33–93 (RLRAYFMRRM…KLIDHWRRRK (61 aa)) is sigma-70 factor domain-2. Positions 51 to 64 (DLVQETLLAVHLKR) match the Polymerase core binding motif. The sigma-70 factor domain-4 stretch occupies residues 123 to 170 (ALASLPQRQRMLVSDVKLTGLSLAEAGARAGISEGAAKVALHRALKAL). The segment at residues 145-164 (LAEAGARAGISEGAAKVALH) is a DNA-binding region (H-T-H motif).

It belongs to the sigma-70 factor family. ECF subfamily.

The protein localises to the cytoplasm. Functionally, sigma factors are initiation factors that promote the attachment of RNA polymerase to specific initiation sites and are then released. Extracytoplasmic function (ECF) sigma factors are held in an inactive form by a cognate anti-sigma factor (NrsF in this case) until they are released. Up-regulates expression of 4 operons (sigF-nrsF, CCNA_02834, CCNA_03001 to CCNA_02999 and CCNA_03363 to CCNA_03366) in response to potassium dichromate (K(2)Cr(2)O(7)) or cadmium chloride (CdCl(2)). Overexpression of sigF leads to higher expression of its regulon. The chain is ECF RNA polymerase sigma factor SigF from Caulobacter vibrioides (strain NA1000 / CB15N) (Caulobacter crescentus).